The sequence spans 252 residues: 5-oxoprolinase subunit A (252 aa).

The protein belongs to the LamB/PxpA family. As to quaternary structure, forms a complex composed of PxpA, PxpB and PxpC.

It carries out the reaction 5-oxo-L-proline + ATP + 2 H2O = L-glutamate + ADP + phosphate + H(+). Its function is as follows. Catalyzes the cleavage of 5-oxoproline to form L-glutamate coupled to the hydrolysis of ATP to ADP and inorganic phosphate. In Bacillus cytotoxicus (strain DSM 22905 / CIP 110041 / 391-98 / NVH 391-98), this protein is 5-oxoprolinase subunit A.